The following is a 72-amino-acid chain: Translation initiation factor IF-1 (72 aa).

The S1-like domain occupies 1-72; the sequence is MSKEDVIELE…TRGRIVWRSK (72 aa).

This sequence belongs to the IF-1 family. In terms of assembly, component of the 30S ribosomal translation pre-initiation complex which assembles on the 30S ribosome in the order IF-2 and IF-3, IF-1 and N-formylmethionyl-tRNA(fMet); mRNA recruitment can occur at any time during PIC assembly.

Its subcellular location is the cytoplasm. In terms of biological role, one of the essential components for the initiation of protein synthesis. Stabilizes the binding of IF-2 and IF-3 on the 30S subunit to which N-formylmethionyl-tRNA(fMet) subsequently binds. Helps modulate mRNA selection, yielding the 30S pre-initiation complex (PIC). Upon addition of the 50S ribosomal subunit IF-1, IF-2 and IF-3 are released leaving the mature 70S translation initiation complex. The protein is Translation initiation factor IF-1 of Caldicellulosiruptor saccharolyticus (strain ATCC 43494 / DSM 8903 / Tp8T 6331).